We begin with the raw amino-acid sequence, 410 residues long: Serine hydroxymethyltransferase (410 aa).

(6S)-5,6,7,8-tetrahydrofolate is bound by residues L119 and 123-125 (GHL). Residue K228 is modified to N6-(pyridoxal phosphate)lysine. Position 351–353 (351–353 (SPF)) interacts with (6S)-5,6,7,8-tetrahydrofolate.

The protein belongs to the SHMT family. In terms of assembly, homodimer. Requires pyridoxal 5'-phosphate as cofactor.

The protein localises to the cytoplasm. It carries out the reaction (6R)-5,10-methylene-5,6,7,8-tetrahydrofolate + glycine + H2O = (6S)-5,6,7,8-tetrahydrofolate + L-serine. Its pathway is one-carbon metabolism; tetrahydrofolate interconversion. The protein operates within amino-acid biosynthesis; glycine biosynthesis; glycine from L-serine: step 1/1. Functionally, catalyzes the reversible interconversion of serine and glycine with tetrahydrofolate (THF) serving as the one-carbon carrier. This reaction serves as the major source of one-carbon groups required for the biosynthesis of purines, thymidylate, methionine, and other important biomolecules. Also exhibits THF-independent aldolase activity toward beta-hydroxyamino acids, producing glycine and aldehydes, via a retro-aldol mechanism. This chain is Serine hydroxymethyltransferase, found in Alkaliphilus metalliredigens (strain QYMF).